A 911-amino-acid chain; its full sequence is DNA replication licensing factor mcm4 (911 aa).

The tract at residues 1-132 (MSSSQQSGRA…RPGVSTPSSL (132 aa)) is disordered. Residues serine 37, serine 38, and serine 41 each carry the phosphoserine modification. The span at 42-56 (TRLTTPRTTARTPLA) shows a compositional bias: low complexity. Over residues 63-84 (ESSSPGPNIPQSSRSHLLSQRN) the composition is skewed to polar residues. Residue serine 92 is modified to Phosphoserine. One can recognise an MCM domain in the interval 493–702 (IYDILSRSLA…LDRKLANHIV (210 aa)). 545–552 (GDPSTSKS) contacts ATP. Positions 677 to 680 (SRFD) match the Arginine finger motif.

It belongs to the MCM family. Component of the mcm2-7 complex. The complex forms a toroidal hexameric ring with the proposed subunit order mcm2-mcm6-mcm4-mcm7-mcm3-mcm5. The heterodimers of mcm4/mcm6 and mcm3/mcm5 interact with mcm2 and mcm7.

The protein localises to the nucleus. It catalyses the reaction ATP + H2O = ADP + phosphate + H(+). In terms of biological role, acts as a component of the mcm2-7 complex (mcm complex) which is the putative replicative helicase essential for 'once per cell cycle' DNA replication initiation and elongation in eukaryotic cells. The active ATPase sites in the mcm2-7 ring are formed through the interaction surfaces of two neighboring subunits such that a critical structure of a conserved arginine finger motif is provided in trans relative to the ATP-binding site of the Walker A box of the adjacent subunit. The six ATPase active sites, however, are likely to contribute differentially to the complex helicase activity. Required for S phase execution. The sequence is that of DNA replication licensing factor mcm4 (mcm4) from Schizosaccharomyces pombe (strain 972 / ATCC 24843) (Fission yeast).